Here is a 201-residue protein sequence, read N- to C-terminus: Molybdenum cofactor guanylyltransferase (201 aa).

Residues 14 to 16 (LAG), Lys31, and Asp104 contribute to the GTP site. Position 104 (Asp104) interacts with Mg(2+).

The protein belongs to the MobA family. Monomer. It depends on Mg(2+) as a cofactor.

It is found in the cytoplasm. The catalysed reaction is Mo-molybdopterin + GTP + H(+) = Mo-molybdopterin guanine dinucleotide + diphosphate. Its function is as follows. Transfers a GMP moiety from GTP to Mo-molybdopterin (Mo-MPT) cofactor (Moco or molybdenum cofactor) to form Mo-molybdopterin guanine dinucleotide (Mo-MGD) cofactor. The chain is Molybdenum cofactor guanylyltransferase from Helicobacter pylori (strain P12).